A 289-amino-acid polypeptide reads, in one-letter code: 4-diphosphocytidyl-2-C-methyl-D-erythritol kinase (289 aa).

Lys10 is an active-site residue. 94 to 104 (PVAAGLAGGSS) contributes to the ATP binding site. Asp136 is a catalytic residue.

It belongs to the GHMP kinase family. IspE subfamily.

It carries out the reaction 4-CDP-2-C-methyl-D-erythritol + ATP = 4-CDP-2-C-methyl-D-erythritol 2-phosphate + ADP + H(+). It functions in the pathway isoprenoid biosynthesis; isopentenyl diphosphate biosynthesis via DXP pathway; isopentenyl diphosphate from 1-deoxy-D-xylulose 5-phosphate: step 3/6. Functionally, catalyzes the phosphorylation of the position 2 hydroxy group of 4-diphosphocytidyl-2C-methyl-D-erythritol. This Bacillus anthracis (strain CDC 684 / NRRL 3495) protein is 4-diphosphocytidyl-2-C-methyl-D-erythritol kinase.